We begin with the raw amino-acid sequence, 210 residues long: MEAIGPNKHGNPFIGHEHTLYDISPGHVYAKSKRMVEQLVTKANNSVIMNGAKLYTCCLRPTGIYGGGDKLTKVFYEQCTQHGNIMYRTVDDDAVHSRVYVGNVAWMHVLAVKYIQYPGSEIKGNAYFCYGYSPSCSYDMFNLLLMKPLGIEQGSRIPRWMLKMYTCKNDMKRILFRKPSLLNNYTLKISNTTFEARQQCRTRFQLLPYL.

Residue Tyr-29 is the Proton acceptor of the active site. Lys-33 provides a ligand contact to NAD(+).

The protein belongs to the 3-beta-HSD family.

The enzyme catalyses a 3beta-hydroxy-Delta(5)-steroid + NAD(+) = a 3-oxo-Delta(5)-steroid + NADH + H(+). It catalyses the reaction a 3-oxo-Delta(5)-steroid = a 3-oxo-Delta(4)-steroid. The protein operates within lipid metabolism; steroid biosynthesis. Its function is as follows. Catalyzes the oxidative conversion of Delta(5)-ene-3-beta-hydroxy steroid, and the oxidative conversion of ketosteroids. The 3-beta-HSD enzymatic system plays a crucial role in the biosynthesis of all classes of hormonal steroids. During viral infection, steroid production contributes to virulence by inhibiting the host inflammatory response. In Variola virus (isolate Human/India/Ind3/1967) (VARV), this protein is 3 beta-hydroxysteroid dehydrogenase/Delta 5--&gt;4-isomerase (OPG174).